Here is a 493-residue protein sequence, read N- to C-terminus: Geraniol 8-hydroxylase (493 aa).

Topologically, residues M1–I6 are lumenal. The helical transmembrane segment at I7–L23 threads the bilayer. The Cytoplasmic segment spans residues S24–L493. Residue C436 coordinates heme.

It belongs to the cytochrome P450 family. Heme is required as a cofactor. As to expression, expressed in roots, stems, leaves and flower buds. Hardly detected in mature flowers and fruits. Expressed in the internal phloem-associated parenchyma.

The protein localises to the endoplasmic reticulum membrane. It carries out the reaction (2E)-geraniol + reduced [NADPH--hemoprotein reductase] + O2 = (6E)-8-hydroxygeraniol + oxidized [NADPH--hemoprotein reductase] + H2O + H(+). In terms of biological role, hydroxylase involved in the biosynthesis of hydroxygeraniol, a precursor of the terpenoid indole alkaloids such as vinblastine and vincristine. Also able to hydroxylate in vitro nerol and to catalyze 3'-hydroxylation of the flavanone naringenin to form eriodictyol. No activity with apigenin, kaempferol, p-coumaric acid and ferulic acid as substrates. This Catharanthus roseus (Madagascar periwinkle) protein is Geraniol 8-hydroxylase (CYP76B6).